Reading from the N-terminus, the 406-residue chain is Formate-dependent phosphoribosylglycinamide formyltransferase (406 aa).

N(1)-(5-phospho-beta-D-ribosyl)glycinamide is bound by residues 28 to 29 and E88; that span reads EL. ATP contacts are provided by residues R121, K162, 167–172, 202–205, and E210; these read SSGKGQ and EGFI. One can recognise an ATP-grasp domain in the interval 126–320; the sequence is RLAAEELGCA…EFELHAKAIL (195 aa). Mg(2+) contacts are provided by E279 and E291. N(1)-(5-phospho-beta-D-ribosyl)glycinamide contacts are provided by residues D298, K367, and 374-375; that span reads RR.

This sequence belongs to the PurK/PurT family. Homodimer.

It catalyses the reaction N(1)-(5-phospho-beta-D-ribosyl)glycinamide + formate + ATP = N(2)-formyl-N(1)-(5-phospho-beta-D-ribosyl)glycinamide + ADP + phosphate + H(+). It participates in purine metabolism; IMP biosynthesis via de novo pathway; N(2)-formyl-N(1)-(5-phospho-D-ribosyl)glycinamide from N(1)-(5-phospho-D-ribosyl)glycinamide (formate route): step 1/1. Its function is as follows. Involved in the de novo purine biosynthesis. Catalyzes the transfer of formate to 5-phospho-ribosyl-glycinamide (GAR), producing 5-phospho-ribosyl-N-formylglycinamide (FGAR). Formate is provided by PurU via hydrolysis of 10-formyl-tetrahydrofolate. The polypeptide is Formate-dependent phosphoribosylglycinamide formyltransferase (Janthinobacterium sp. (strain Marseille) (Minibacterium massiliensis)).